Consider the following 326-residue polypeptide: Beta-ketoacyl-[acyl-carrier-protein] synthase III (326 aa).

Active-site residues include cysteine 111 and histidine 253. The interval 254-258 (QANSR) is ACP-binding. The active site involves asparagine 283.

This sequence belongs to the thiolase-like superfamily. FabH family. Homodimer.

It localises to the cytoplasm. The enzyme catalyses malonyl-[ACP] + acetyl-CoA + H(+) = 3-oxobutanoyl-[ACP] + CO2 + CoA. It functions in the pathway lipid metabolism; fatty acid biosynthesis. In terms of biological role, catalyzes the condensation reaction of fatty acid synthesis by the addition to an acyl acceptor of two carbons from malonyl-ACP. Catalyzes the first condensation reaction which initiates fatty acid synthesis and may therefore play a role in governing the total rate of fatty acid production. Possesses both acetoacetyl-ACP synthase and acetyl transacylase activities. Its substrate specificity determines the biosynthesis of branched-chain and/or straight-chain of fatty acids. The chain is Beta-ketoacyl-[acyl-carrier-protein] synthase III from Latilactobacillus sakei subsp. sakei (strain 23K) (Lactobacillus sakei subsp. sakei).